Consider the following 75-residue polypeptide: UPF0346 protein LEUM_0763 (75 aa).

The protein belongs to the UPF0346 family.

This is UPF0346 protein LEUM_0763 from Leuconostoc mesenteroides subsp. mesenteroides (strain ATCC 8293 / DSM 20343 / BCRC 11652 / CCM 1803 / JCM 6124 / NCDO 523 / NBRC 100496 / NCIMB 8023 / NCTC 12954 / NRRL B-1118 / 37Y).